The sequence spans 218 residues: Adenylate kinase (218 aa).

10-15 provides a ligand contact to ATP; it reads GAGKGT. Residues 30–59 are NMP; sequence STGNMLRAAVKAGTPLGLEAKKVMDAGGLV. AMP is bound by residues Thr31, Arg36, 57–59, 85–88, and Gln92; these read GLV and GFPR. An LID region spans residues 122-159; the sequence is GRRVHPASGRSYHVRFNPPKAEGVDDVTGEPLVQRDDD. Residues Arg123 and 132-133 contribute to the ATP site; that span reads SY. AMP contacts are provided by Arg156 and Arg167. Gly203 is a binding site for ATP.

The protein belongs to the adenylate kinase family. As to quaternary structure, monomer.

The protein resides in the cytoplasm. It carries out the reaction AMP + ATP = 2 ADP. Its pathway is purine metabolism; AMP biosynthesis via salvage pathway; AMP from ADP: step 1/1. Catalyzes the reversible transfer of the terminal phosphate group between ATP and AMP. Plays an important role in cellular energy homeostasis and in adenine nucleotide metabolism. The sequence is that of Adenylate kinase from Bordetella parapertussis (strain 12822 / ATCC BAA-587 / NCTC 13253).